We begin with the raw amino-acid sequence, 506 residues long: Proline--tRNA ligase (506 aa).

The protein belongs to the class-II aminoacyl-tRNA synthetase family. ProS type 3 subfamily. In terms of assembly, homodimer.

It localises to the cytoplasm. It carries out the reaction tRNA(Pro) + L-proline + ATP = L-prolyl-tRNA(Pro) + AMP + diphosphate. Functionally, catalyzes the attachment of proline to tRNA(Pro) in a two-step reaction: proline is first activated by ATP to form Pro-AMP and then transferred to the acceptor end of tRNA(Pro). The sequence is that of Proline--tRNA ligase from Akkermansia muciniphila (strain ATCC BAA-835 / DSM 22959 / JCM 33894 / BCRC 81048 / CCUG 64013 / CIP 107961 / Muc).